The sequence spans 269 residues: Glutamate racemase (269 aa).

Residues 14 to 15 (DS) and 46 to 47 (YS) contribute to the substrate site. The active-site Proton donor/acceptor is the Cys-78. Residue 79-80 (NT) coordinates substrate. Cys-189 (proton donor/acceptor) is an active-site residue. 190–191 (TH) lines the substrate pocket.

This sequence belongs to the aspartate/glutamate racemases family.

The enzyme catalyses L-glutamate = D-glutamate. The protein operates within cell wall biogenesis; peptidoglycan biosynthesis. Provides the (R)-glutamate required for cell wall biosynthesis. This chain is Glutamate racemase, found in Haemophilus influenzae (strain ATCC 51907 / DSM 11121 / KW20 / Rd).